The chain runs to 1088 residues: DNA damage-binding protein 1a (1088 aa).

It belongs to the DDB1 family. In terms of assembly, component of the CDD complex, at least composed of COP10, DET1 and DDB1A. Component of the CUL4-RBX1-CDD complex. Component of the CUL4-RBX1-DDB1-PRL1 E3 ubiquitin-protein ligase complex. Component of the UV-DDB complex, which is composed of DDB1A and DDB2. Interacts with RAE1. Interacts with WDR55. Interacts with ATCSA-1. Interacts with DDA1. Binds to ASG2; the subcellular localization of this complex depends on ASG2 farnesylation status. Binds to KTN80.2/DWA3. Interacts with HTD1. Interacts directly with DHU1.

Its subcellular location is the cytoplasm. The protein localises to the nucleus. The protein operates within protein modification; protein ubiquitination. Component of light signal transduction machinery. Involved in repression of photomorphogenesis in darkness by participating in the CDD complex, a complex probably required to regulate the activity of ubiquitin conjugating enzymes (E2s). Repression of photomorphogenesis is probably mediated by ubiquitination and subsequent degradation of photomorphogenesis-promoting factors such as HY5, HYH and LAF1. Plays a role in DNA repair by forming with DDB2 the UV-damaged DNA-binding protein complex (UV-DDB). Component of the CUL4-RBX1-DDB1-PRL1 E3 ubiquitin-protein ligase complex. The protein is DNA damage-binding protein 1a of Arabidopsis thaliana (Mouse-ear cress).